The following is a 215-amino-acid chain: Cytidylate kinase (215 aa).

11–19 (GPTASGKGT) contributes to the ATP binding site.

This sequence belongs to the cytidylate kinase family. Type 1 subfamily.

It localises to the cytoplasm. The catalysed reaction is CMP + ATP = CDP + ADP. It catalyses the reaction dCMP + ATP = dCDP + ADP. The chain is Cytidylate kinase from Polynucleobacter necessarius subsp. necessarius (strain STIR1).